The chain runs to 427 residues: Enolase (427 aa).

Gln-163 serves as a coordination point for (2R)-2-phosphoglycerate. Glu-205 serves as the catalytic Proton donor. Mg(2+) contacts are provided by Asp-242, Glu-285, and Asp-312. Lys-337, Arg-366, Ser-367, and Lys-388 together coordinate (2R)-2-phosphoglycerate. Lys-337 serves as the catalytic Proton acceptor.

This sequence belongs to the enolase family. Requires Mg(2+) as cofactor.

The protein localises to the cytoplasm. The protein resides in the secreted. It localises to the cell surface. The enzyme catalyses (2R)-2-phosphoglycerate = phosphoenolpyruvate + H2O. The protein operates within carbohydrate degradation; glycolysis; pyruvate from D-glyceraldehyde 3-phosphate: step 4/5. In terms of biological role, catalyzes the reversible conversion of 2-phosphoglycerate (2-PG) into phosphoenolpyruvate (PEP). It is essential for the degradation of carbohydrates via glycolysis. The protein is Enolase of Rhodopseudomonas palustris (strain BisA53).